Consider the following 221-residue polypeptide: Large ribosomal subunit protein uL16y (221 aa).

This sequence belongs to the universal ribosomal protein uL16 family. As to quaternary structure, component of the small ribosomal subunit. Mature ribosomes consist of a small (40S) and a large (60S) subunit. The 40S subunit contains about 33 different proteins and 1 molecule of RNA (18S). The 60S subunit contains about 49 different proteins and 3 molecules of RNA (25S, 5.8S and 5S).

This chain is Large ribosomal subunit protein uL16y (RPL10B), found in Arabidopsis thaliana (Mouse-ear cress).